The following is a 321-amino-acid chain: 2,3,4,5-tetrahydropyridine-2,6-dicarboxylate N-succinyltransferase (321 aa).

Positions 166 and 183 each coordinate Mg(2+). Residue E199 is the Acyl-anhydride intermediate of the active site. Residues R201, G216, S219, A242, 257–258 (EA), G265, K281, and 294–297 (RRNS) contribute to the succinyl-CoA site.

It belongs to the type 2 tetrahydrodipicolinate N-succinyltransferase family. In terms of assembly, homotrimer.

Its subcellular location is the cytoplasm. It carries out the reaction (S)-2,3,4,5-tetrahydrodipicolinate + succinyl-CoA + H2O = (S)-2-succinylamino-6-oxoheptanedioate + CoA. Its pathway is amino-acid biosynthesis; L-lysine biosynthesis via DAP pathway; LL-2,6-diaminopimelate from (S)-tetrahydrodipicolinate (succinylase route): step 1/3. Its function is as follows. Catalyzes the conversion of the cyclic tetrahydrodipicolinate (THDP) into the acyclic N-succinyl-L-2-amino-6-oxopimelate using succinyl-CoA. The protein is 2,3,4,5-tetrahydropyridine-2,6-dicarboxylate N-succinyltransferase of Rothia mucilaginosa (strain DY-18) (Stomatococcus mucilaginosus).